The primary structure comprises 291 residues: Exosome complex exonuclease RRP42 (291 aa).

Ala-2 is modified (N-acetylalanine). An N6-acetyllysine modification is found at Lys-116.

This sequence belongs to the RNase PH family. In terms of assembly, component of the RNA exosome core complex (Exo-9), composed of EXOSC1, EXOSC2, EXOSC3, EXOSC4, EXOSC5, EXOSC6, EXOSC7, EXOSC8 and EXOSC9; within the complex interacts with EXOSC2 and EXOSC4. The catalytically inactive RNA exosome core complex (Exo-9) associates with the catalytic subunit EXOSC10/RRP6. Exo-9 may associate with DIS3 to form the nucleolar exosome complex, or DIS3L to form the cytoplasmic exosome complex. Exo-9 is formed by a hexameric base ring consisting of the heterodimers EXOSC4-EXOSC9, EXOSC5-EXOSC8 and EXOSC6-EXOSC7, and a cap ring consisting of EXOSC1, EXOSC2 and EXOSC3. The RNA exosome complex associates with cofactors C1D/RRP47, MPHOSPH6/MPP6 and MTREX/MTR4. Interacts with ZC3HAV1. Interacts with DIS3; the interaction is direct.

The protein resides in the nucleus. It localises to the nucleolus. The protein localises to the cytoplasm. Functionally, non-catalytic component of the RNA exosome complex which has 3'-&gt;5' exoribonuclease activity and participates in a multitude of cellular RNA processing and degradation events. In the nucleus, the RNA exosome complex is involved in proper maturation of stable RNA species such as rRNA, snRNA and snoRNA, in the elimination of RNA processing by-products and non-coding 'pervasive' transcripts, such as antisense RNA species and promoter-upstream transcripts (PROMPTs), and of mRNAs with processing defects, thereby limiting or excluding their export to the cytoplasm. The RNA exosome may be involved in Ig class switch recombination (CSR) and/or Ig variable region somatic hypermutation (SHM) by targeting AICDA deamination activity to transcribed dsDNA substrates. In the cytoplasm, the RNA exosome complex is involved in general mRNA turnover and specifically degrades inherently unstable mRNAs containing AU-rich elements (AREs) within their 3' untranslated regions, and in RNA surveillance pathways, preventing translation of aberrant mRNAs. It seems to be involved in degradation of histone mRNA. The catalytic inactive RNA exosome core complex of 9 subunits (Exo-9) is proposed to play a pivotal role in the binding and presentation of RNA for ribonucleolysis, and to serve as a scaffold for the association with catalytic subunits and accessory proteins or complexes. The chain is Exosome complex exonuclease RRP42 (Exosc7) from Mus musculus (Mouse).